The sequence spans 352 residues: Phosphoribosylformylglycinamidine cyclo-ligase (352 aa).

This sequence belongs to the AIR synthase family.

The protein localises to the cytoplasm. It catalyses the reaction 2-formamido-N(1)-(5-O-phospho-beta-D-ribosyl)acetamidine + ATP = 5-amino-1-(5-phospho-beta-D-ribosyl)imidazole + ADP + phosphate + H(+). It functions in the pathway purine metabolism; IMP biosynthesis via de novo pathway; 5-amino-1-(5-phospho-D-ribosyl)imidazole from N(2)-formyl-N(1)-(5-phospho-D-ribosyl)glycinamide: step 2/2. In Ectopseudomonas mendocina (strain ymp) (Pseudomonas mendocina), this protein is Phosphoribosylformylglycinamidine cyclo-ligase.